Reading from the N-terminus, the 526-residue chain is Glucose-6-phosphate 1-dehydrogenase (526 aa).

NADP(+)-binding positions include 50–57, Arg-84, and Lys-184; that span reads GASGDLAK. D-glucose 6-phosphate-binding positions include Lys-184, 214 to 218, Glu-252, and Asp-271; that span reads HYLGK. The active-site Proton acceptor is His-276. Arg-370 serves as a coordination point for NADP(+). Residues Lys-373 and Arg-378 each coordinate D-glucose 6-phosphate. 3 residues coordinate NADP(+): Lys-379, Arg-383, and Arg-406. Gln-408 serves as a coordination point for D-glucose 6-phosphate. Residues 414–416, 434–436, Arg-500, Tyr-516, and Trp-522 contribute to the NADP(+) site; these read YFK and DLT.

This sequence belongs to the glucose-6-phosphate dehydrogenase family.

The protein resides in the cytoplasm. It is found in the cytosol. The enzyme catalyses D-glucose 6-phosphate + NADP(+) = 6-phospho-D-glucono-1,5-lactone + NADPH + H(+). It participates in carbohydrate degradation; pentose phosphate pathway; D-ribulose 5-phosphate from D-glucose 6-phosphate (oxidative stage): step 1/3. Functionally, cytosolic glucose-6-phosphate dehydrogenase that catalyzes the first and rate-limiting step of the oxidative branch within the pentose phosphate pathway/shunt, an alternative route to glycolysis for the dissimilation of carbohydrates and a major source of reducing power and metabolic intermediates for fatty acid and nucleic acid biosynthetic processes. The polypeptide is Glucose-6-phosphate 1-dehydrogenase (ZW) (Ceratitis capitata (Mediterranean fruit fly)).